The chain runs to 225 residues: Ribonuclease HII (225 aa).

Residues 35–225 (GLVAGVDEVG…SFRPCQISLD (191 aa)) form the RNase H type-2 domain. Positions 41, 42, and 137 each coordinate a divalent metal cation.

The protein belongs to the RNase HII family. Mn(2+) serves as cofactor. It depends on Mg(2+) as a cofactor.

It is found in the cytoplasm. It catalyses the reaction Endonucleolytic cleavage to 5'-phosphomonoester.. In terms of biological role, endonuclease that specifically degrades the RNA of RNA-DNA hybrids. In Trichormus variabilis (strain ATCC 29413 / PCC 7937) (Anabaena variabilis), this protein is Ribonuclease HII.